We begin with the raw amino-acid sequence, 923 residues long: Periodic tryptophan protein 2 (923 aa).

WD repeat units follow at residues 12–52 (GTVY…TFEY), 53–93 (EHRK…LHHF), 94–132 (NFKEKCSAVKFSPDGRLFALASGRFLQIWKTPDVNKDRQ), 144–183 (GHFQDITSLTWSQDSRFILTTSKDLSAKIWSVDSEEKNLA), and 189–228 (GHRDYVMGAFFSHDQEKIYTVSKDGAVFVWEFTKRPSDDD). A phosphoserine mark is found at Ser225 and Ser232. WD repeat units lie at residues 258–297 (ANQAKVKCVTFHPATRLLAVGFTSGEFRLYDLPDFTLIQQ), 300–340 (MGQN…YILK), 343–382 (GHFDSTNSLAYSPDGSRVVTASEDGKIKVWDITSGFCLAT), 385–424 (EHTSSVTAVQFAKRGQVMFSSSLDGTVRAWDLIRYRNFRT), 428–470 (TERI…DALS), 471–510 (GHEGPVSCLSFSQENSVLASASWDKTIRIWSIFGRSQQVE), 513–552 (EVYSDVLALSMRPDGKEVAVSTLKGQISIFNIEDAKQVGN), and 575–614 (ERSKFFTTIHYSFDGMAIVAGGNNNSICLYDVPNEVLLKR). A phosphoserine mark is found at Ser651 and Ser664. The interval 653-674 (LEDRIDNSLPGSQRGGDLSTRK) is disordered. The WD 14 repeat unit spans residues 676–714 (RPEVRVTSVQFSPTANAFAAASTEGLLIYSTNDTILFDP). Composition is skewed to acidic residues over residues 869–893 (KDDADEDNEENEENDVVMESDDEEG) and 911–923 (DSSDEEENEKELP). Residues 869–923 (KDDADEDNEENEENDVVMESDDEEGWIGFNGKDNKLPLSNENDSSDEEENEKELP) form a disordered region. Residues Ser912 and Ser913 each carry the phosphoserine modification.

It belongs to the WD repeat PWP2 family. As to quaternary structure, interacts with snoRNA U3. Interacts with MPP10. Component of the ribosomal small subunit (SSU) processome composed of at least 40 protein subunits and snoRNA U3.

The protein resides in the nucleus. It localises to the nucleolus. Functionally, required for bud-site selection and cell separation. Also involved in nucleolar processing of pre-18S ribosomal RNA. This is Periodic tryptophan protein 2 (PWP2) from Saccharomyces cerevisiae (strain ATCC 204508 / S288c) (Baker's yeast).